Here is a 134-residue protein sequence, read N- to C-terminus: Large ribosomal subunit protein uL16 (134 aa).

The segment covering 1 to 20 (MLLQPKRTKFRKMHKGRNRG) has biased composition (basic residues). The tract at residues 1–21 (MLLQPKRTKFRKMHKGRNRGT) is disordered.

Belongs to the universal ribosomal protein uL16 family. Part of the 50S ribosomal subunit.

Its function is as follows. Binds 23S rRNA and is also seen to make contacts with the A and possibly P site tRNAs. The polypeptide is Large ribosomal subunit protein uL16 (Blochmanniella pennsylvanica (strain BPEN)).